An 815-amino-acid polypeptide reads, in one-letter code: Leucine--tRNA ligase (815 aa).

The 'HIGH' region motif lies at 41–51; the sequence is PYPSGTLHVGH. Positions 576–580 match the 'KMSKS' region motif; sequence KMSKS. K579 contributes to the ATP binding site.

Belongs to the class-I aminoacyl-tRNA synthetase family.

The protein resides in the cytoplasm. The catalysed reaction is tRNA(Leu) + L-leucine + ATP = L-leucyl-tRNA(Leu) + AMP + diphosphate. In Pseudothermotoga lettingae (strain ATCC BAA-301 / DSM 14385 / NBRC 107922 / TMO) (Thermotoga lettingae), this protein is Leucine--tRNA ligase.